The chain runs to 130 residues: Protachykinin-1 (130 aa).

A signal peptide spans 1-19; sequence MKILVAVAVFFLVSTQLFA. A propeptide spanning residues 20–56 is cleaved from the precursor; the sequence is EEIDANDDLNYWSDWSDSDQIKEAMPEPFEHLLQRIA. Residues Met68 and Met107 each carry the methionine amide modification.

The protein belongs to the tachykinin family. In terms of processing, the substance P form is cleaved at Pro-59 by the prolyl endopeptidase FAP (seprase) activity (in vitro). Substance P is also cleaved and degraded by Angiotensin-converting enzyme (ACE) and neprilysin (MME).

It is found in the secreted. Functionally, tachykinins are active peptides which excite neurons, evoke behavioral responses, are potent vasodilators and secretagogues, and contract (directly or indirectly) many smooth muscles. The chain is Protachykinin-1 (Tac1) from Mus musculus (Mouse).